Consider the following 597-residue polypeptide: HECT-type ubiquitin ligase-interacting protein creD (597 aa).

Disordered stretches follow at residues 375–398 (EVDP…GTLS), 439–492 (ASEH…MATP), and 576–597 (SRSH…RGRA). Over residues 452 to 466 (GPPSGSNTHGSNTHA) the composition is skewed to polar residues. The segment covering 472-483 (LSRRASDEDVHD) has biased composition (basic and acidic residues).

It belongs to the arrestin family. Interacts with hulA.

In terms of biological role, component of the regulatory network controlling carbon source utilization through ubiquitination and deubiquitination involving creA, creB, creC, creD and acrB. May be involved in signaling by recognizing appropriately phosphorylated substrates via its arrestin domains and then recruit a HECT-type ubiquitin ligase such as hulA, leading to ubiquitination of the substrate, providing a link between ubiquitination and phosphorylation in protein regulation and stability. This chain is HECT-type ubiquitin ligase-interacting protein creD (creD), found in Emericella nidulans (strain FGSC A4 / ATCC 38163 / CBS 112.46 / NRRL 194 / M139) (Aspergillus nidulans).